Here is a 433-residue protein sequence, read N- to C-terminus: Enolase (433 aa).

Gln-167 lines the (2R)-2-phosphoglycerate pocket. Glu-209 (proton donor) is an active-site residue. Mg(2+) is bound at residue Asp-246. The Plasminogen-binding motif motif lies at 252–260; it reads FYDAEKKEY. Positions 291 and 318 each coordinate Mg(2+). (2R)-2-phosphoglycerate is bound by residues Lys-343, Arg-372, Ser-373, and Lys-394. Lys-343 (proton acceptor) is an active-site residue.

It belongs to the enolase family. As to quaternary structure, component of the RNA degradosome, a multiprotein complex involved in RNA processing and mRNA degradation. Mg(2+) serves as cofactor.

It localises to the cell inner membrane. The protein resides in the cell outer membrane. Its subcellular location is the cytoplasm. It is found in the secreted. The protein localises to the cell surface. It carries out the reaction (2R)-2-phosphoglycerate = phosphoenolpyruvate + H2O. Its pathway is carbohydrate degradation; glycolysis; pyruvate from D-glyceraldehyde 3-phosphate: step 4/5. Catalyzes the reversible conversion of 2-phosphoglycerate (2-PG) into phosphoenolpyruvate (PEP). It is essential for the degradation of carbohydrates via glycolysis. Its function is as follows. 'Moonlights' as a plasminogen receptor and plasmin activator. Binds host (human) plasminogen in vitro. Binds human plasmin and plasminogen on the cell surface; enhances the activity of host tissue-specific plasminogen activator (tPA). Plasmin bound to bacteria is partially protected from its physiological inhibitor alpha-2AP (SERPINF2). The chain is Enolase from Aeromonas hydrophila.